Consider the following 627-residue polypeptide: MEEADRILIHSLRQAGTAVPPEVQTLRAFTTELVVEAVVRCLRVINPDVGSGLSHLLPPAMSARFRLAMSLAQACMDLGYPLELGYQNFLYPSEPDLRDLLLFLAERLPSDASEDADQPAGDSAIFLRAIGSQIRDQLALPWVPPLLRTPKVQRLQGSALQQPFHSSRLVLPELNSSGELWEFQASPLLLPAPTQVPQLQGRAASLLEHHASQLCQHVNRDCPGDEDRVRWASRVPSQEDSRAPQQRLHKQLIEHLRQSWGPLGAPTQVRDLGEMLQTWGARAMTGVPKGSRFTHSEKFTFHLEPQVQAAQVADVPATSQRLEQDTRAAQEQELESLREQLASVNHNIEEVEADMKTLGINLVQVETECRQSELSVAEQEQALRLKSRTVELLPDGAANLAKLQLVVESSAQRLIHLASQWEKHRVPLLAEYRHLRRLQDCRELESSRRLAEIQELHHSVRAAAEEARRKEEVYKQLVSELETLPKDVSRLAYTQRILEIVGNIRKQKEEITKILSDTKELQKEINSLSGKLDRTFAVTDELVFKDAKKDDAVRKAYKYLAALHENCSQLIQTIEDTGTIMREVRDLEEQIETEMGKKTLSNLEKICEDYRALRQENAGLLGRVREA.

The interval 1 to 321 (MEEADRILIH…VADVPATSQR (321 aa)) is sufficient for interaction with COMMD1. The sufficicient and required for interaction with CCDC93 stretch occupies residues 1-447 (MEEADRILIH…LQDCRELESS (447 aa)). Residue Ser410 is modified to Phosphoserine. Residues 448–535 (RRLAEIQELH…NSLSGKLDRT (88 aa)) adopt a coiled-coil conformation.

Belongs to the CCDC22 family. As to quaternary structure, component of the commander complex consisting of the CCC subcomplex and the retriever subcomplex. Component of the CCC (COMMD/CCDC22/CCDC93) subcomplex consisting of COMMD1, COMMD2, COMMD3, COMMD4, COMMD5, COMMD6, COMMD7, COMMD8, COMMD9, COMMD10, CCDC22 and CCDC93. Forms a coiled-coil heterodimer with CCDC22; this heterodimer interacts with the guanine nucleotide exchange factor DENND10; the interaction is direct. Interacts with CUL1, CUL2, CUL3, SKP1, BTRC. Interacts with SNX17 and SNX31. Interacts with CPNE1 and CPNE4.

The protein localises to the endosome. It localises to the cytoplasm. The protein resides in the cytoskeleton. Its subcellular location is the microtubule organizing center. It is found in the centrosome. Component of the commander complex that is essential for endosomal recycling of transmembrane cargos; the Commander complex is composed of composed of the CCC subcomplex and the retriever subcomplex. Component of the CCC complex, which is involved in the regulation of endosomal recycling of surface proteins, including integrins, signaling receptor and channels. Involved in regulation of NF-kappa-B signaling. Promotes ubiquitination of I-kappa-B-kinase subunit IKBKB and its subsequent proteasomal degradation leading to NF-kappa-B activation; the function may involve association with COMMD8 and a CUL1-dependent E3 ubiquitin ligase complex. May down-regulate NF-kappa-B activity via association with COMMD1 and involving a CUL2-dependent E3 ubiquitin ligase complex. Regulates the cellular localization of COMM domain-containing proteins, such as COMMD1 and COMMD10. Component of the CCC complex, which is involved in the regulation of endosomal recycling of surface proteins, including integrins, signaling receptor and channels. The CCC complex associates with SNX17, retriever and WASH complexes to prevent lysosomal degradation and promote cell surface recycling of numerous cargos such as integrins ITGA5:ITGB1. Plays a role in copper ion homeostasis. Involved in copper-dependent ATP7A trafficking between the trans-Golgi network and vesicles in the cell periphery; the function is proposed to depend on its association within the CCC complex and cooperation with the WASH complex on early endosomes. The chain is Coiled-coil domain-containing protein 22 (Ccdc22) from Mus musculus (Mouse).